Reading from the N-terminus, the 380-residue chain is uncharacterized protein (380 aa).

An N-terminal signal peptide occupies residues 1–28 (MQFLSDTQRMVLSRAVCASFFFFHVAVA). The 74-residue stretch at 307-380 (AGDEKPRGYQ…DAGYETFPLF (74 aa)) folds into the SPOR domain.

This is an uncharacterized protein from Treponema pallidum (strain Nichols).